The following is a 221-amino-acid chain: Thymidylate kinase (221 aa).

12 to 19 (GIDGAGKS) contacts ATP.

Belongs to the thymidylate kinase family.

The catalysed reaction is dTMP + ATP = dTDP + ADP. Phosphorylation of dTMP to form dTDP in both de novo and salvage pathways of dTTP synthesis. The chain is Thymidylate kinase from Paracidovorax citrulli (strain AAC00-1) (Acidovorax citrulli).